We begin with the raw amino-acid sequence, 415 residues long: Elongation factor Tu, chloroplastic (415 aa).

The tr-type G domain occupies K13–R217. A G1 region spans residues G22–T29. G22–T29 is a binding site for GTP. T29 contacts Mg(2+). Residues N63–Y67 are G2. The tract at residues D84 to G87 is G3. GTP is bound by residues D84 to H88 and N139 to D142. The segment at N139 to D142 is G4. The tract at residues S177–L179 is G5.

Belongs to the TRAFAC class translation factor GTPase superfamily. Classic translation factor GTPase family. EF-Tu/EF-1A subfamily.

Its subcellular location is the plastid. The protein localises to the chloroplast. The enzyme catalyses GTP + H2O = GDP + phosphate + H(+). Its function is as follows. GTP hydrolase that promotes the GTP-dependent binding of aminoacyl-tRNA to the A-site of ribosomes during protein biosynthesis. The sequence is that of Elongation factor Tu, chloroplastic (tufA) from Coleochaete orbicularis (Charophycean green alga).